Reading from the N-terminus, the 223-residue chain is Golgi to ER traffic protein 1 (223 aa).

A topological domain (lumenal) is located at residue Met-1. A helical transmembrane segment spans residues 2–21; sequence SWVVAIAVVFVVVLKVLEYS. Residues 22 to 105 lie on the Cytoplasmic side of the membrane; that stretch reads TSYHDLVLQS…QIKGHLKKVK (84 aa). A coiled-coil region spans residues 56–105; the sequence is ENKSISAQDNYAKWTKNNRKLDKLDKEITELGAQLKAHNEQIKGHLKKVK. A helical membrane pass occupies residues 106–126; it reads LLLLTVPFLCFKLWKGKHIVY. Residues 127–177 are Lumenal-facing; that stretch reads NLPHHQMFPQLVAGVWSQGWLYLAILPLQLAKSIVTGSSFAIETASFPHMG. The helical transmembrane segment at 178-194 threads the bilayer; it reads VSLGIWLWALNSVISNI. The Cytoplasmic portion of the chain corresponds to 195–223; sequence EFMTMQLWAKPVSKPSKKLEIVTDEIKVD.

It belongs to the WRB/GET1 family. In terms of assembly, component of the Golgi to ER traffic (GET) complex, which is composed of GET1, GET2 and GET3. Within the complex, GET1 and GET2 form a heterotetramer which is stabilized by phosphatidylinositol binding and which binds to the GET3 homodimer.

Its subcellular location is the endoplasmic reticulum membrane. It localises to the golgi apparatus membrane. In terms of biological role, required for the post-translational delivery of tail-anchored (TA) proteins to the endoplasmic reticulum. Together with GET2, acts as a membrane receptor for soluble GET3, which recognizes and selectively binds the transmembrane domain of TA proteins in the cytosol. The GET complex cooperates with the HDEL receptor ERD2 to mediate the ATP-dependent retrieval of resident ER proteins that contain a C-terminal H-D-E-L retention signal from the Golgi to the ER. In Candida glabrata (strain ATCC 2001 / BCRC 20586 / JCM 3761 / NBRC 0622 / NRRL Y-65 / CBS 138) (Yeast), this protein is Golgi to ER traffic protein 1.